A 50-amino-acid polypeptide reads, in one-letter code: Insulin (50 aa).

Intrachain disulfides connect cysteine 7/cysteine 36, cysteine 19/cysteine 49, and cysteine 35/cysteine 40.

It belongs to the insulin family. In terms of assembly, heterodimer of a B chain and an A chain linked by two disulfide bonds.

It localises to the secreted. Its function is as follows. Insulin decreases blood glucose concentration. It increases cell permeability to monosaccharides, amino acids and fatty acids. It accelerates glycolysis, the pentose phosphate cycle, and glycogen synthesis in liver. This is Insulin (INS) from Proechimys guairae (Guaira spiny rat).